The primary structure comprises 138 residues: Phospholipase A2 EC1 (138 aa).

Positions 1-16 are cleaved as a signal peptide; sequence MRTLWIVAVWLMSVEG. 7 cysteine pairs are disulfide-bonded: C42–C131, C44–C60, C59–C111, C65–C138, C66–C104, C73–C97, and C91–C102. Ca(2+) is bound by residues Y43, G45, and G47. Residue H63 is part of the active site. D64 serves as a coordination point for Ca(2+). D105 is a catalytic residue.

Belongs to the phospholipase A2 family. Group II subfamily. Ca(2+) serves as cofactor.

It localises to the secreted. It catalyses the reaction a 1,2-diacyl-sn-glycero-3-phosphocholine + H2O = a 1-acyl-sn-glycero-3-phosphocholine + a fatty acid + H(+). The protein is Phospholipase A2 EC1 of Echis coloratus (Carpet viper).